We begin with the raw amino-acid sequence, 329 residues long: Ketol-acid reductoisomerase (NADP(+)) (329 aa).

The region spanning 2-182 is the KARI N-terminal Rossmann domain; it reads TQLFYDTDAD…GGTRAGILET (181 aa). NADP(+) is bound by residues 25 to 28, serine 51, serine 53, and 83 to 86; these read YGSQ and DEFQ. Histidine 108 is a catalytic residue. Glycine 134 lines the NADP(+) pocket. Positions 183–328 constitute a KARI C-terminal knotted domain; the sequence is NFKEETETDL…KGLRSMFSWL (146 aa). Aspartate 191, glutamate 195, glutamate 227, and glutamate 231 together coordinate Mg(2+). Serine 252 lines the substrate pocket.

This sequence belongs to the ketol-acid reductoisomerase family. Mg(2+) is required as a cofactor.

It catalyses the reaction (2R)-2,3-dihydroxy-3-methylbutanoate + NADP(+) = (2S)-2-acetolactate + NADPH + H(+). The enzyme catalyses (2R,3R)-2,3-dihydroxy-3-methylpentanoate + NADP(+) = (S)-2-ethyl-2-hydroxy-3-oxobutanoate + NADPH + H(+). Its pathway is amino-acid biosynthesis; L-isoleucine biosynthesis; L-isoleucine from 2-oxobutanoate: step 2/4. It functions in the pathway amino-acid biosynthesis; L-valine biosynthesis; L-valine from pyruvate: step 2/4. In terms of biological role, involved in the biosynthesis of branched-chain amino acids (BCAA). Catalyzes an alkyl-migration followed by a ketol-acid reduction of (S)-2-acetolactate (S2AL) to yield (R)-2,3-dihydroxy-isovalerate. In the isomerase reaction, S2AL is rearranged via a Mg-dependent methyl migration to produce 3-hydroxy-3-methyl-2-ketobutyrate (HMKB). In the reductase reaction, this 2-ketoacid undergoes a metal-dependent reduction by NADPH to yield (R)-2,3-dihydroxy-isovalerate. This chain is Ketol-acid reductoisomerase (NADP(+)), found in Prochlorococcus marinus (strain AS9601).